Consider the following 276-residue polypeptide: Undecaprenyl-diphosphatase (276 aa).

The next 8 helical transmembrane spans lie at 1–21, 40–60, 93–113, 120–140, 154–174, 199–219, 227–247, and 255–275; these read MELY…FLPV, ALSF…LVFF, VRLA…GLIL, LFSS…FLWL, IGFG…IPGI, FLLS…ESFA, VTLL…VALL, and FYLF…AGFV.

Belongs to the UppP family.

The protein resides in the cell inner membrane. The enzyme catalyses di-trans,octa-cis-undecaprenyl diphosphate + H2O = di-trans,octa-cis-undecaprenyl phosphate + phosphate + H(+). Catalyzes the dephosphorylation of undecaprenyl diphosphate (UPP). Confers resistance to bacitracin. This chain is Undecaprenyl-diphosphatase, found in Desulforapulum autotrophicum (strain ATCC 43914 / DSM 3382 / VKM B-1955 / HRM2) (Desulfobacterium autotrophicum).